Reading from the N-terminus, the 562-residue chain is Apical membrane antigen 1 (562 aa).

The signal sequence occupies residues 1–21 (MNKIYCILFLSAQCLVHMGKC). Residues 22 to 484 (EPNQKPSRLT…QYAQGESKNQ (463 aa)) are Extracellular-facing. N-linked (GlcNAc...) asparagine glycans are attached at residues Asn84 and Asn176. 8 disulfide bridges follow: Cys94-Cys247, Cys162-Cys192, Cys208-Cys220, Cys265-Cys363, Cys282-Cys354, Cys388-Cys444, Cys432-Cys449, and Cys434-Cys451. Asn226 is a glycosylation site (N-linked (GlcNAc...) asparagine). N-linked (GlcNAc...) asparagine glycans are attached at residues Asn405 and Asn441. The helical transmembrane segment at 485–507 (MLLIIIGITGGVCVVALASMFYF) threads the bilayer. Residues 508–562 (RKKAHNDKYDKMEQADGYGKPTTRKDEMLDPEASFWGEEKRASHTTPVLMEKPYY) lie on the Cytoplasmic side of the membrane. The interval 519 to 543 (MEQADGYGKPTTRKDEMLDPEASFW) is disordered.

It belongs to the apicomplexan parasites AMA1 family.

It is found in the membrane. In terms of biological role, involved in parasite invasion of erythrocytes. This chain is Apical membrane antigen 1 (AMA-1), found in Plasmodium fragile.